A 206-amino-acid chain; its full sequence is Large ribosomal subunit protein bL25 (206 aa).

The bL25 domain stretch occupies residues 1–91 (MEYRLKAYYR…RPEHVDFFVL (91 aa)). The segment at 92 to 206 (SDEPVEMYVP…IKKGKEEEEE (115 aa)) is CTC domain. Residues 184-206 (AEEAAAEVAEPEVIKKGKEEEEE) form a disordered region. The segment covering 195–206 (EVIKKGKEEEEE) has biased composition (basic and acidic residues).

Belongs to the bacterial ribosomal protein bL25 family. CTC subfamily. As to quaternary structure, part of the 50S ribosomal subunit. Contacts the 5S rRNA.

In terms of biological role, this is one of 3 proteins that mediate the attachment of the 5S rRNA onto the large ribosomal subunit. This chain is Large ribosomal subunit protein bL25 (rplY), found in Thermus thermophilus.